A 548-amino-acid polypeptide reads, in one-letter code: Beta-caryophyllene synthase (548 aa).

R268, D305, D309, R446, and D449 together coordinate (2E,6E)-farnesyl diphosphate. Mg(2+) is bound by residues D305 and D309. The DDXXD motif signature appears at 305–309 (DDIYD). Mg(2+) contacts are provided by D449 and E457.

Belongs to the terpene synthase family. Mg(2+) serves as cofactor.

The catalysed reaction is (2E,6E)-farnesyl diphosphate = (-)-(E)-beta-caryophyllene + diphosphate. It participates in secondary metabolite biosynthesis; terpenoid biosynthesis. In terms of biological role, sesquiterpene synthase that catalyzes the formation of sesquiterpenes and sesquiterpenoid alcohols. Converts farnesyl diphosphate (FPP) to beta-caryophyllene. Can use geranyl diphosphate (GPP) to produce myrcene, limonene and camphene. The chain is Beta-caryophyllene synthase from Lavandula angustifolia (Lavender).